Here is a 376-residue protein sequence, read N- to C-terminus: Serpin B6 (376 aa).

At Met-1 the chain carries N-acetylmethionine. At Ser-151 the chain carries Phosphoserine. Lys-195 carries the N6-acetyllysine modification.

This sequence belongs to the serpin family. Ov-serpin subfamily. Forms a complex with the monomeric form of beta-tryptase.

It is found in the cytoplasm. Functionally, inhibitor of cathepsin G, kallikrein-8 and thrombin. May play an important role in the inner ear in the protection against leakage of lysosomal content during stress. May be involved in the regulation of serine proteinases present in the brain or extravasated from the blood. The chain is Serpin B6 (SERPINB6) from Macaca fascicularis (Crab-eating macaque).